Reading from the N-terminus, the 132-residue chain is Small ribosomal subunit protein uS8 (132 aa).

This sequence belongs to the universal ribosomal protein uS8 family. In terms of assembly, part of the 30S ribosomal subunit. Contacts proteins S5 and S12.

One of the primary rRNA binding proteins, it binds directly to 16S rRNA central domain where it helps coordinate assembly of the platform of the 30S subunit. This is Small ribosomal subunit protein uS8 from Bacillus pumilus (strain SAFR-032).